The chain runs to 618 residues: Serine/threonine-protein kinase TNNI3K (618 aa).

A lipid anchor (N-myristoyl glycine) is attached at glycine 2. A coiled-coil region spans residues 21-51; sequence SESYVITIERLEDDLKIKEKELTELRNIFGS. ANK repeat units lie at residues 66-96, 100-129, 133-162, 166-195, 199-228, 234-263, 269-298, 304-335, 339-368, and 381-410; these read NGLSLLHLCCICGGNKSHIRTLMLKGLRPSR, NGFTALHLAVYKDNAELITSLLHGGADIQQ, GGLTALHIATIAGHLEAADVLLQHGANVNI, VFFTPLHIAAYYGHEQVTRLLLKFGADVNV, VGDRPLHLASAKGFLNIAKLLMEEGSKADV, EDHVPLHFCSRFGHHDIVKYLLQNDLEVQP, YGDTPLHLACYNGKFEVAKEIIQISGTESL, FSETAFHSACTYGKSIDLVKFLLDQNVININH, DGHTGLHSACYHGHIHLVQFLLDNGADMNL, and DEQTCLMWAYEKGHDAIVTLLKHYKRPQDE. Residues 463 to 618 form the Protein kinase domain; it reads IEFHEIIGSG…TAHTIYLLAP (156 aa). ATP is bound by residues 469–477 and lysine 490; that span reads IGSGSFGKV. Residue aspartate 588 is the Proton acceptor of the active site.

Belongs to the protein kinase superfamily. TKL Ser/Thr protein kinase family. MAP kinase kinase kinase subfamily. Interacts with TNNI3, ACTC, ACTA1, MYBPC3, AIP, FABP3 and HADHB. Requires Mg(2+) as cofactor. Post-translationally, autophosphorylated.

It is found in the nucleus. It localises to the cytoplasm. It carries out the reaction L-seryl-[protein] + ATP = O-phospho-L-seryl-[protein] + ADP + H(+). The catalysed reaction is L-threonyl-[protein] + ATP = O-phospho-L-threonyl-[protein] + ADP + H(+). In terms of biological role, may play a role in cardiac physiology. The protein is Serine/threonine-protein kinase TNNI3K of Pongo abelii (Sumatran orangutan).